We begin with the raw amino-acid sequence, 497 residues long: Acetyl-coenzyme A carboxylase carboxyl transferase subunit beta, chloroplastic (497 aa).

Residues Leu-230–Lys-497 enclose the CoA carboxyltransferase N-terminal domain. Zn(2+)-binding residues include Cys-234, Cys-237, Cys-253, and Cys-256. A C4-type zinc finger spans residues Cys-234–Cys-256.

The protein belongs to the AccD/PCCB family. In terms of assembly, acetyl-CoA carboxylase is a heterohexamer composed of biotin carboxyl carrier protein, biotin carboxylase and 2 subunits each of ACCase subunit alpha and ACCase plastid-coded subunit beta (accD). Zn(2+) serves as cofactor.

It is found in the plastid. It localises to the chloroplast stroma. It carries out the reaction N(6)-carboxybiotinyl-L-lysyl-[protein] + acetyl-CoA = N(6)-biotinyl-L-lysyl-[protein] + malonyl-CoA. It participates in lipid metabolism; malonyl-CoA biosynthesis; malonyl-CoA from acetyl-CoA: step 1/1. Functionally, component of the acetyl coenzyme A carboxylase (ACC) complex. Biotin carboxylase (BC) catalyzes the carboxylation of biotin on its carrier protein (BCCP) and then the CO(2) group is transferred by the transcarboxylase to acetyl-CoA to form malonyl-CoA. This is Acetyl-coenzyme A carboxylase carboxyl transferase subunit beta, chloroplastic from Platanus occidentalis (Sycamore).